The following is a 314-amino-acid chain: Methionyl-tRNA formyltransferase (314 aa).

A (6S)-5,6,7,8-tetrahydrofolate-binding site is contributed by 110-113 (SLLP).

Belongs to the Fmt family.

The enzyme catalyses L-methionyl-tRNA(fMet) + (6R)-10-formyltetrahydrofolate = N-formyl-L-methionyl-tRNA(fMet) + (6S)-5,6,7,8-tetrahydrofolate + H(+). Functionally, attaches a formyl group to the free amino group of methionyl-tRNA(fMet). The formyl group appears to play a dual role in the initiator identity of N-formylmethionyl-tRNA by promoting its recognition by IF2 and preventing the misappropriation of this tRNA by the elongation apparatus. This chain is Methionyl-tRNA formyltransferase, found in Bacillus cytotoxicus (strain DSM 22905 / CIP 110041 / 391-98 / NVH 391-98).